We begin with the raw amino-acid sequence, 875 residues long: DNA gyrase subunit A (875 aa).

In terms of domain architecture, Topo IIA-type catalytic spans 34 to 533 (LPDVRDGLKP…NSADINLEDL (500 aa)). Residue Y122 is the O-(5'-phospho-DNA)-tyrosine intermediate of the active site. A GyrA-box motif is present at residues 560–566 (QRRGGKG). Residues 841–875 (EPVDEEDLDTIDGSAAEGDDEIAPEVDVDDEPEEE) form a disordered region. The span at 857 to 875 (EGDDEIAPEVDVDDEPEEE) shows a compositional bias: acidic residues.

The protein belongs to the type II topoisomerase GyrA/ParC subunit family. In terms of assembly, heterotetramer, composed of two GyrA and two GyrB chains. In the heterotetramer, GyrA contains the active site tyrosine that forms a transient covalent intermediate with DNA, while GyrB binds cofactors and catalyzes ATP hydrolysis.

It localises to the cytoplasm. It catalyses the reaction ATP-dependent breakage, passage and rejoining of double-stranded DNA.. Its function is as follows. A type II topoisomerase that negatively supercoils closed circular double-stranded (ds) DNA in an ATP-dependent manner to modulate DNA topology and maintain chromosomes in an underwound state. Negative supercoiling favors strand separation, and DNA replication, transcription, recombination and repair, all of which involve strand separation. Also able to catalyze the interconversion of other topological isomers of dsDNA rings, including catenanes and knotted rings. Type II topoisomerases break and join 2 DNA strands simultaneously in an ATP-dependent manner. The protein is DNA gyrase subunit A of Shigella flexneri.